The chain runs to 1318 residues: Tetratricopeptide repeat protein 41 (1318 aa).

6 TPR repeats span residues 401-434 (PRLE…KPCI), 653-686 (WIQE…PVRE), 819-852 (GRII…LLQS), 860-893 (LRAQ…LLRF), 993-1029 (MEFL…KEKA), and 1047-1084 (SDTL…RAAH). A disordered region spans residues 1295–1318 (KPGFPRRSQIESKLLKTSDDPNKE). Positions 1302-1318 (SQIESKLLKTSDDPNKE) are enriched in basic and acidic residues.

As to expression, highly expressed in lung and myeloid leukemia cell line (at protein level). Isoform 4: expressed in heart (at protein level).

The protein localises to the cytoplasm. The protein is Tetratricopeptide repeat protein 41 of Mus musculus (Mouse).